The following is an 87-amino-acid chain: Phosphoribosyl-ATP pyrophosphatase (87 aa).

It belongs to the PRA-PH family.

It is found in the cytoplasm. The catalysed reaction is 1-(5-phospho-beta-D-ribosyl)-ATP + H2O = 1-(5-phospho-beta-D-ribosyl)-5'-AMP + diphosphate + H(+). Its pathway is amino-acid biosynthesis; L-histidine biosynthesis; L-histidine from 5-phospho-alpha-D-ribose 1-diphosphate: step 2/9. This chain is Phosphoribosyl-ATP pyrophosphatase, found in Bifidobacterium adolescentis (strain ATCC 15703 / DSM 20083 / NCTC 11814 / E194a).